The sequence spans 175 residues: NADH-ubiquinone oxidoreductase chain 6 (175 aa).

The next 5 membrane-spanning stretches (helical) occupy residues 1 to 21, 27 to 47, 49 to 69, 88 to 108, and 149 to 169; these read MMTY…VGFS, VYGG…IMNF, GSFL…VVFG, VVFG…LYVL, and YGMW…VVVM.

It belongs to the complex I subunit 6 family. In terms of assembly, core subunit of respiratory chain NADH dehydrogenase (Complex I) which is composed of 45 different subunits.

It localises to the mitochondrion inner membrane. The enzyme catalyses a ubiquinone + NADH + 5 H(+)(in) = a ubiquinol + NAD(+) + 4 H(+)(out). Its function is as follows. Core subunit of the mitochondrial membrane respiratory chain NADH dehydrogenase (Complex I) which catalyzes electron transfer from NADH through the respiratory chain, using ubiquinone as an electron acceptor. Essential for the catalytic activity and assembly of complex I. In Pteropus scapulatus (Little red flying fox), this protein is NADH-ubiquinone oxidoreductase chain 6 (MT-ND6).